Consider the following 914-residue polypeptide: Linoleate 13S-lipoxygenase 3-1, chloroplastic (914 aa).

Residues 1–83 (MALAKEIMGI…PEKAVRFKVR (83 aa)) constitute a chloroplast transit peptide. Residues 96–218 (LKETIVKHLD…DHPGKRIFFS (123 aa)) enclose the PLAT domain. Positions 221–914 (PYLPDETPAG…CRGVPNSVSI (694 aa)) constitute a Lipoxygenase domain. Residues His-574, His-579, His-765, Asn-769, and Ile-914 each contribute to the Fe cation site.

Belongs to the lipoxygenase family. Monomer. It depends on Fe cation as a cofactor. As to expression, expressed in roots and leaves. Detected in tubers and flower buds.

Its subcellular location is the plastid. The protein localises to the chloroplast stroma. The protein resides in the chloroplast thylakoid. The enzyme catalyses (9Z,12Z)-octadecadienoate + O2 = (13S)-hydroperoxy-(9Z,11E)-octadecadienoate. The catalysed reaction is (9Z,12Z,15Z)-octadecatrienoate + O2 = (13S)-hydroperoxy-(9Z,11E,15Z)-octadecatrienoate. Its pathway is lipid metabolism; oxylipin biosynthesis. In terms of biological role, plant lipoxygenases may be involved in a number of diverse aspects of plant physiology including growth and development, pest resistance, and senescence or responses to wounding. Required for the regulation of wound-induced gene expression, but is not involved in the bulk production of jasmonate upon wounding. Catalyzes the hydroperoxidation of lipids containing a cis,cis-1,4-pentadiene structure. Linolenic acid is the preferred substrate, before linoleic and arachidonic acids. This chain is Linoleate 13S-lipoxygenase 3-1, chloroplastic (LOX3.1), found in Solanum tuberosum (Potato).